Reading from the N-terminus, the 399-residue chain is S-adenosylmethionine synthase (399 aa).

Residue H15 coordinates ATP. D17 provides a ligand contact to Mg(2+). E43 contributes to the K(+) binding site. L-methionine-binding residues include E56 and Q99. A flexible loop region spans residues Q99 to H109. ATP-binding positions include D175–K177, R242–F243, D251, R257–K258, A274, and K278. D251 is a binding site for L-methionine. Residue K282 participates in L-methionine binding.

Belongs to the AdoMet synthase family. In terms of assembly, homotetramer; dimer of dimers. The cofactor is Mg(2+). K(+) is required as a cofactor.

It is found in the cytoplasm. The catalysed reaction is L-methionine + ATP + H2O = S-adenosyl-L-methionine + phosphate + diphosphate. The protein operates within amino-acid biosynthesis; S-adenosyl-L-methionine biosynthesis; S-adenosyl-L-methionine from L-methionine: step 1/1. Functionally, catalyzes the formation of S-adenosylmethionine (AdoMet) from methionine and ATP. The overall synthetic reaction is composed of two sequential steps, AdoMet formation and the subsequent tripolyphosphate hydrolysis which occurs prior to release of AdoMet from the enzyme. In Lactobacillus acidophilus (strain ATCC 700396 / NCK56 / N2 / NCFM), this protein is S-adenosylmethionine synthase.